The primary structure comprises 344 residues: MSKACWLVAAIIFTAATVVYGQQAPCFFVFGDSMSDNGNNNNLKSEAKVNFSPYGNDFPKGPTGRFSNGRTIPDIIGELSGFKDFIPPFAEASPEQAHTGMNYASGGSGLREETSEHLGDRISIRKQLQNHKTSITKANVPAERLQQCLYMINIGSNDYINNYFMSKPYNTKRRYTPKQYAYSLIIIYRSHLKNLHRLGARKVAVFGLSQIGCTPKIMKSHSDGKICSREVNEAVKIFNKNLDDLVMDFNKKVRGAKFTYVDLFSGGDPQAFIFLGFKVGGKSCCTVNPGEELCVPNQPVCANRTEYVFWDDLHSTEATNMVVAKGSFDGIISKPYSIAQLAKE.

A signal peptide spans 1 to 21; sequence MSKACWLVAAIIFTAATVVYG. Ser-33 acts as the Nucleophile in catalysis. An N-linked (GlcNAc...) asparagine glycan is attached at Asn-303. Residues Asp-311 and His-314 contribute to the active site.

It belongs to the 'GDSL' lipolytic enzyme family.

It is found in the secreted. This chain is GDSL esterase/lipase At2g19010, found in Arabidopsis thaliana (Mouse-ear cress).